The following is a 322-amino-acid chain: MSAVPHDSATHPPVVCLLGPTASGKTAAALALAADAPVEIISLDSALVYREMDIGTAKPTREELAAAPHHLIDIIDPADSYSAAQFVTDAERLIAQIRARGHVPLIVGGTMLYYKALTQGLNDLPQADAALRAELDQLAAERGWPALHAMLAEVDPVTAARLAPNDAQRIQRALEIHRLSGQPMSALLARQAEGRTFAGAADQRFRVIALEPSDRLALHARIAQRYDAMLANGFIEEVERLRRRGDLHPGLPSIRCVGYRQVWEYLDGDADFATMRERGIAATRQLCKRQLTWLRSTPERLVVDCLAPGYVDQVRRLADFGH.

An ATP-binding site is contributed by 19 to 26 (GPTASGKT). Substrate is bound at residue 21–26 (TASGKT). 3 interaction with substrate tRNA regions span residues 44–47 (DSAL), 168–172 (QRIQR), and 255–260 (RCVGYR).

It belongs to the IPP transferase family. In terms of assembly, monomer. Requires Mg(2+) as cofactor.

The enzyme catalyses adenosine(37) in tRNA + dimethylallyl diphosphate = N(6)-dimethylallyladenosine(37) in tRNA + diphosphate. Functionally, catalyzes the transfer of a dimethylallyl group onto the adenine at position 37 in tRNAs that read codons beginning with uridine, leading to the formation of N6-(dimethylallyl)adenosine (i(6)A). This Cupriavidus necator (strain ATCC 17699 / DSM 428 / KCTC 22496 / NCIMB 10442 / H16 / Stanier 337) (Ralstonia eutropha) protein is tRNA dimethylallyltransferase.